Reading from the N-terminus, the 152-residue chain is Deoxyuridine 5'-triphosphate nucleotidohydrolase (152 aa).

Substrate-binding positions include R72–G74, N85, and T89–D91.

This sequence belongs to the dUTPase family. It depends on Mg(2+) as a cofactor.

It catalyses the reaction dUTP + H2O = dUMP + diphosphate + H(+). Its pathway is pyrimidine metabolism; dUMP biosynthesis; dUMP from dCTP (dUTP route): step 2/2. Its function is as follows. This enzyme is involved in nucleotide metabolism: it produces dUMP, the immediate precursor of thymidine nucleotides and it decreases the intracellular concentration of dUTP so that uracil cannot be incorporated into DNA. This is Deoxyuridine 5'-triphosphate nucleotidohydrolase from Rhodopseudomonas palustris (strain BisB18).